Reading from the N-terminus, the 864-residue chain is Protein PAT1 homolog 1 (864 aa).

The span at 427–439 shows a compositional bias: polar residues; it reads PPNSRPNGPQFSG. Disordered regions lie at residues 427–460, 518–539, and 551–602; these read PPNS…SGMP, WTAH…SRKD, and EMQK…STHN. Residues 551–580 are compositionally biased toward basic and acidic residues; the sequence is EMQKERLRDREKERQRERQERIDRGEERKP.

The protein belongs to the PAT1 family.

It localises to the cytoplasm. Its subcellular location is the P-body. Functionally, RNA-binding protein involved in deadenylation-dependent decapping of mRNAs, leading to the degradation of mRNAs. Acts as a scaffold protein that connects deadenylation and decapping machinery. Required for the recruitment of P-body components such as cgh-1 in somatic blastomeres. May play a role in recruiting the decapping enzyme dcap-1 to cytoplasmic puncta in the cell body of the posterior touch receptor neuron, PLM. The chain is Protein PAT1 homolog 1 (patr-1) from Caenorhabditis briggsae.